We begin with the raw amino-acid sequence, 259 residues long: Caffeoyl-CoA O-methyltransferase (259 aa).

Lys33 contacts substrate. Residues Thr75, Glu97, 99-100, Ser105, Asp123, and Ala152 each bind S-adenosyl-L-methionine; that span reads GV. Position 175 (Asp175) interacts with substrate. Asp175 lines the a divalent metal cation pocket. Asp177 contacts S-adenosyl-L-methionine. A divalent metal cation-binding residues include Asp201 and Asn202. Asn206 lines the substrate pocket.

This sequence belongs to the class I-like SAM-binding methyltransferase superfamily. Cation-dependent O-methyltransferase family. CCoAMT subfamily. Requires a divalent metal cation as cofactor.

The catalysed reaction is (E)-caffeoyl-CoA + S-adenosyl-L-methionine = (E)-feruloyl-CoA + S-adenosyl-L-homocysteine + H(+). The protein operates within aromatic compound metabolism; phenylpropanoid biosynthesis. Its function is as follows. Methylates caffeoyl-CoA to feruloyl-CoA and 5-hydroxyferuloyl-CoA to sinapoyl-CoA. Plays a role in the synthesis of feruloylated polysaccharides. Involved in the reinforcement of the plant cell wall. Also involved in the responding to wounding or pathogen challenge by the increased formation of cell wall-bound ferulic acid polymers. This chain is Caffeoyl-CoA O-methyltransferase (CCOAOMT), found in Pinus taeda (Loblolly pine).